Consider the following 562-residue polypeptide: Potassium-transporting ATPase potassium-binding subunit (562 aa).

Transmembrane regions (helical) follow at residues 5–25, 63–83, 132–152, 175–195, 250–270, 279–299, 379–399, 416–436, 483–503, and 526–546; these read AFLLIFGLLLTVLIVAQPLGS, AAAILALNLIGIVVLFVLLMA, GLTVQNFLSAASGIAVAFALI, LYVLLPLSLLLALFFVSQGVL, LSNIVQMLAILLIPTALCFAF, QGHALLWAMALIFIVAAAVVM, GLYGMLLFVLLTVFIAGLMIG, MTALAILIPPALVLLGTALAL, VLLAVAMLLGRFAVMVPVLAI, and LFIGMLIAIVLLIGALTFIPA.

Belongs to the KdpA family. The system is composed of three essential subunits: KdpA, KdpB and KdpC.

The protein localises to the cell inner membrane. Part of the high-affinity ATP-driven potassium transport (or Kdp) system, which catalyzes the hydrolysis of ATP coupled with the electrogenic transport of potassium into the cytoplasm. This subunit binds the periplasmic potassium ions and delivers the ions to the membrane domain of KdpB through an intramembrane tunnel. The protein is Potassium-transporting ATPase potassium-binding subunit of Pectobacterium atrosepticum (strain SCRI 1043 / ATCC BAA-672) (Erwinia carotovora subsp. atroseptica).